A 163-amino-acid polypeptide reads, in one-letter code: Large ribosomal subunit protein bL17 (163 aa).

Low complexity predominate over residues 123-135 (AEASRATRASASK). The disordered stretch occupies residues 123-163 (AEASRATRASASKKAAEEAETEEVVEAPAEETATEEAAEEK). Residues 140–163 (EAETEEVVEAPAEETATEEAAEEK) are compositionally biased toward acidic residues.

This sequence belongs to the bacterial ribosomal protein bL17 family. In terms of assembly, part of the 50S ribosomal subunit. Contacts protein L32.

The protein is Large ribosomal subunit protein bL17 of Corynebacterium glutamicum (strain ATCC 13032 / DSM 20300 / JCM 1318 / BCRC 11384 / CCUG 27702 / LMG 3730 / NBRC 12168 / NCIMB 10025 / NRRL B-2784 / 534).